The sequence spans 468 residues: Ribulose bisphosphate carboxylase large chain (468 aa).

Position 5 is an N6,N6,N6-trimethyllysine (lysine 5). Residues asparagine 114 and threonine 164 each coordinate substrate. Catalysis depends on lysine 166, which acts as the Proton acceptor. Lysine 168 serves as a coordination point for substrate. Mg(2+) is bound by residues lysine 192, aspartate 194, and glutamate 195. N6-carboxylysine is present on lysine 192. Histidine 285 acts as the Proton acceptor in catalysis. Substrate contacts are provided by arginine 286, histidine 318, and serine 370.

Belongs to the RuBisCO large chain family. Type I subfamily. Heterohexadecamer of 8 large chains and 8 small chains; disulfide-linked. The disulfide link is formed within the large subunit homodimers. It depends on Mg(2+) as a cofactor. In terms of processing, the disulfide bond which can form in the large chain dimeric partners within the hexadecamer appears to be associated with oxidative stress and protein turnover.

It localises to the plastid. It is found in the chloroplast. The enzyme catalyses 2 (2R)-3-phosphoglycerate + 2 H(+) = D-ribulose 1,5-bisphosphate + CO2 + H2O. It catalyses the reaction D-ribulose 1,5-bisphosphate + O2 = 2-phosphoglycolate + (2R)-3-phosphoglycerate + 2 H(+). In terms of biological role, ruBisCO catalyzes two reactions: the carboxylation of D-ribulose 1,5-bisphosphate, the primary event in carbon dioxide fixation, as well as the oxidative fragmentation of the pentose substrate in the photorespiration process. Both reactions occur simultaneously and in competition at the same active site. This Anthospermum herbaceum protein is Ribulose bisphosphate carboxylase large chain.